We begin with the raw amino-acid sequence, 659 residues long: 3-hydroxypropionyl-coenzyme A synthetase (659 aa).

Residue Asp525 is part of the active site. The residue at position 616 (Lys616) is an N6-acetyllysine.

Belongs to the ATP-dependent AMP-binding enzyme family.

The catalysed reaction is 3-hydroxypropanoate + ATP + CoA = 3-hydroxypropanoyl-CoA + AMP + diphosphate. Its function is as follows. Plays a role in the autotrophic CO(2) fixation pathway. Activates 3-hydroxypropionate to its CoA ester. Can also activate propionate, and to a lesser extent acrylate, acetate and butyrate. This chain is 3-hydroxypropionyl-coenzyme A synthetase, found in Sulfurisphaera tokodaii (strain DSM 16993 / JCM 10545 / NBRC 100140 / 7) (Sulfolobus tokodaii).